The primary structure comprises 270 residues: Phosphonates import ATP-binding protein PhnC (270 aa).

The 244-residue stretch at 2 to 245 folds into the ABC transporter domain; that stretch reads LVIEGLTCRF…IARELYDLEA (244 aa). An ATP-binding site is contributed by 34–41; sequence GRSGAGKS.

It belongs to the ABC transporter superfamily. Phosphonates importer (TC 3.A.1.9.1) family. The complex is composed of two ATP-binding proteins (PhnC), two transmembrane proteins (PhnE) and a solute-binding protein (PhnD).

The protein resides in the cell inner membrane. The enzyme catalyses phosphonate(out) + ATP + H2O = phosphonate(in) + ADP + phosphate + H(+). Part of the ABC transporter complex PhnCDE involved in phosphonates import. Responsible for energy coupling to the transport system. This is Phosphonates import ATP-binding protein PhnC from Rhodopseudomonas palustris (strain BisB5).